Here is a 351-residue protein sequence, read N- to C-terminus: DNA-directed RNA polymerase subunit alpha (351 aa).

The segment at 1–245 (MPRRNLLKGF…EHFTVFVNFD (245 aa)) is alpha N-terminal domain (alpha-NTD). Positions 261 to 351 (AVLELLNTKI…MRQKEEIDEA (91 aa)) are alpha C-terminal domain (alpha-CTD).

The protein belongs to the RNA polymerase alpha chain family. In terms of assembly, homodimer. The RNAP catalytic core consists of 2 alpha, 1 beta, 1 beta' and 1 omega subunit. When a sigma factor is associated with the core the holoenzyme is formed, which can initiate transcription.

The enzyme catalyses RNA(n) + a ribonucleoside 5'-triphosphate = RNA(n+1) + diphosphate. Its function is as follows. DNA-dependent RNA polymerase catalyzes the transcription of DNA into RNA using the four ribonucleoside triphosphates as substrates. The protein is DNA-directed RNA polymerase subunit alpha of Treponema pallidum (strain Nichols).